Here is a 486-residue protein sequence, read N- to C-terminus: Protein kinase C and casein kinase substrate in neurons protein 2 (486 aa).

Residues 11–282 (VEVSSDSFWE…SIKAADAVED (272 aa)) enclose the F-BAR domain. A coiled-coil region spans residues 25 to 274 (KRTVKRIDDG…TIYRELEQSI (250 aa)). Lysine 53 bears the N6-acetyllysine mark. Serine 273 bears the Phosphoserine mark. Position 313 is a phosphoserine; by PKC (serine 313). Residues 315–426 (REKKKAVDGV…NPFDEDTTSG (112 aa)) form a disordered region. The segment covering 327 to 362 (TGINQTGDQSGQNKPGSNLSVPSNPAQSTQLQSSYN) has biased composition (polar residues). The short motif at 362-364 (NPF) is the NPF1 element. Serine 373 carries the post-translational modification Phosphoserine; by IKKB. Polar residues predominate over residues 384-396 (NVSSYEKTQTYPT). A Phosphoserine modification is found at serine 399. Polar residues predominate over residues 404-416 (NNPFSSTDANGDS). The short motif at 405–407 (NPF) is the NPF2 element. An NPF3 motif is present at residues 417 to 419 (NPF). One can recognise an SH3 domain in the interval 426-486 (GTEVRVRALY…YPANYVEAIQ (61 aa)). A Phosphoserine modification is found at serine 446.

The protein belongs to the PACSIN family. As to quaternary structure, homodimer. May form heterooligomers with other PACSINs. Interacts (via NPF motifs) with EHD1 (via EH domain). Interacts (via NPF motifs) with EHD2 (via EH domain); this interaction probably stabilizes the caveolae. Interacts with EHD3. Interacts (via the SH3 domain) with MICALL1. Interacts with RAC1. Interacts (via SH3 domain) with DNM1, SYN1, SYNJ1 and WASL. Interacts (via F-BAR domain) with CAV1; this interaction induces membrane tubulation. Interacts with TRPV4. Forms a complex with EHD4 and MICALL1; the complex controls CDH5 trafficking and coordinates angiogenesis. Post-translationally, phosphorylated by casein kinase 2 (CK2). Phosphorylation by PKC probably decreases the membrane binding and tubulation capacities of PACSIN2, thereby modulating the lifetime of caveolae. As to expression, widely expressed (at protein level).

It is found in the cytoplasm. It localises to the cytoskeleton. The protein resides in the cytoplasmic vesicle membrane. Its subcellular location is the cell projection. The protein localises to the ruffle membrane. It is found in the early endosome. It localises to the recycling endosome membrane. The protein resides in the cell membrane. Its subcellular location is the membrane. The protein localises to the caveola. It is found in the cell junction. It localises to the adherens junction. Regulates the morphogenesis and endocytosis of caveolae. Lipid-binding protein that is able to promote the tubulation of the phosphatidic acid-containing membranes it preferentially binds. Plays a role in intracellular vesicle-mediated transport. Involved in the endocytosis of cell-surface receptors like the EGF receptor, contributing to its internalization in the absence of EGF stimulus. Essential for endothelial organization in sprouting angiogenesis, modulates CDH5-based junctions. Facilitates endothelial front-rear polarity during migration by recruiting EHD4 and MICALL1 to asymmetric adherens junctions between leader and follower cells. The chain is Protein kinase C and casein kinase substrate in neurons protein 2 (Pacsin2) from Mus musculus (Mouse).